The following is a 467-amino-acid chain: Neutrophil collagenase (467 aa).

Residues 1 to 20 (MFSLKTLPFLLLLHVQISKA) form the signal peptide. Positions 21–100 (FPVSSKEKNT…CGVPDSGGFM (80 aa)) are cleaved as a propeptide — activation peptide. Residues N54 and N73 are each glycosylated (N-linked (GlcNAc...) asparagine). Positions 89-96 (PRCGVPDS) match the Cysteine switch motif. C91 provides a ligand contact to Zn(2+). The N-linked (GlcNAc...) asparagine glycan is linked to N112. D157 is a binding site for Ca(2+). The Zn(2+) site is built by H167 and D169. 4 residues coordinate Ca(2+): D174, G175, N177, and I179. H182 is a binding site for Zn(2+). Residues G189, G191, and D193 each contribute to the Ca(2+) site. H195 is a binding site for Zn(2+). D197 and E200 together coordinate Ca(2+). N204 carries N-linked (GlcNAc...) asparagine glycosylation. Zn(2+) is bound at residue H217. The active site involves E218. The Zn(2+) site is built by H221 and H227. A glycan (N-linked (GlcNAc...) asparagine) is linked at N246. Hemopexin repeat units lie at residues 276–325 (PKPC…WPSL), 326–372 (PTGI…GFPS), 374–420 (VQAI…FPGI), and 421–464 (ESKV…WLNC). Cysteines 279 and 464 form a disulfide. D286 lines the Ca(2+) pocket. The Ca(2+) site is built by D378 and D425.

Belongs to the peptidase M10A family. Ca(2+) is required as a cofactor. It depends on Zn(2+) as a cofactor. In terms of tissue distribution, neutrophils.

It localises to the cytoplasmic granule. The protein localises to the secreted. The protein resides in the extracellular space. It is found in the extracellular matrix. It carries out the reaction Cleavage of interstitial collagens in the triple helical domain. Unlike EC 3.4.24.7, this enzyme cleaves type III collagen more slowly than type I.. With respect to regulation, cannot be activated without removal of the activation peptide. Its function is as follows. Can degrade fibrillar type I, II, and III collagens. The polypeptide is Neutrophil collagenase (MMP8) (Homo sapiens (Human)).